We begin with the raw amino-acid sequence, 255 residues long: uncharacterized protein (255 aa).

The protein belongs to the methyltransferase superfamily.

This is an uncharacterized protein from Mycolicibacterium vanbaalenii (strain DSM 7251 / JCM 13017 / BCRC 16820 / KCTC 9966 / NRRL B-24157 / PYR-1) (Mycobacterium vanbaalenii).